We begin with the raw amino-acid sequence, 273 residues long: Imidazole glycerol phosphate synthase subunit HisF (273 aa).

Active-site residues include D12 and D136.

The protein belongs to the HisA/HisF family. As to quaternary structure, heterodimer of HisH and HisF.

It is found in the cytoplasm. It catalyses the reaction 5-[(5-phospho-1-deoxy-D-ribulos-1-ylimino)methylamino]-1-(5-phospho-beta-D-ribosyl)imidazole-4-carboxamide + L-glutamine = D-erythro-1-(imidazol-4-yl)glycerol 3-phosphate + 5-amino-1-(5-phospho-beta-D-ribosyl)imidazole-4-carboxamide + L-glutamate + H(+). The protein operates within amino-acid biosynthesis; L-histidine biosynthesis; L-histidine from 5-phospho-alpha-D-ribose 1-diphosphate: step 5/9. Its function is as follows. IGPS catalyzes the conversion of PRFAR and glutamine to IGP, AICAR and glutamate. The HisF subunit catalyzes the cyclization activity that produces IGP and AICAR from PRFAR using the ammonia provided by the HisH subunit. The polypeptide is Imidazole glycerol phosphate synthase subunit HisF (Halobacterium salinarum (strain ATCC 29341 / DSM 671 / R1)).